A 131-amino-acid chain; its full sequence is Small ribosomal subunit protein uS8 (131 aa).

The protein belongs to the universal ribosomal protein uS8 family. Part of the 30S ribosomal subunit. Contacts proteins S5 and S12.

In terms of biological role, one of the primary rRNA binding proteins, it binds directly to 16S rRNA central domain where it helps coordinate assembly of the platform of the 30S subunit. The chain is Small ribosomal subunit protein uS8 from Chlorobium chlorochromatii (strain CaD3).